The sequence spans 270 residues: MAPKVFYISDGTAITAEVFGHAVLSQFPLEFESLTIPFVETLAKAENVKRQINDCFITTGERPLVFHSIVKPEIRDIIYSSEGLDYDFLNTFVAPLEQHLGVSASPVLHRTHGKANQGYEARIDAINFAMDNDDGQTMKHMDQADLILLGVSRCGKTPSSLYLSMQFGIKAANYPFTEDDMDNLKLPEALKRNKKKLFGLTIDPVRLHEIRQSRMENSRYSSLKQCRLEVKEVEMMFKRERIPYIDTTNHSVEEIATKILDVTGLERHMF.

150 to 157 (GVSRCGKT) lines the ADP pocket.

This sequence belongs to the pyruvate, phosphate/water dikinase regulatory protein family. PSRP subfamily.

The enzyme catalyses [pyruvate, water dikinase] + ADP = [pyruvate, water dikinase]-phosphate + AMP + H(+). It catalyses the reaction [pyruvate, water dikinase]-phosphate + phosphate + H(+) = [pyruvate, water dikinase] + diphosphate. In terms of biological role, bifunctional serine/threonine kinase and phosphorylase involved in the regulation of the phosphoenolpyruvate synthase (PEPS) by catalyzing its phosphorylation/dephosphorylation. This Shewanella oneidensis (strain ATCC 700550 / JCM 31522 / CIP 106686 / LMG 19005 / NCIMB 14063 / MR-1) protein is Putative phosphoenolpyruvate synthase regulatory protein.